The primary structure comprises 719 residues: Polyphosphate kinase (719 aa).

Asparagine 47 serves as a coordination point for ATP. Mg(2+) is bound by residues arginine 377 and arginine 407. Histidine 437 (phosphohistidine intermediate) is an active-site residue. ATP is bound by residues tyrosine 470, arginine 566, and histidine 594.

Belongs to the polyphosphate kinase 1 (PPK1) family. It depends on Mg(2+) as a cofactor. An intermediate of this reaction is the autophosphorylated ppk in which a phosphate is covalently linked to a histidine residue through a N-P bond.

The enzyme catalyses [phosphate](n) + ATP = [phosphate](n+1) + ADP. Its function is as follows. Catalyzes the reversible transfer of the terminal phosphate of ATP to form a long-chain polyphosphate (polyP). The polypeptide is Polyphosphate kinase (Exiguobacterium sibiricum (strain DSM 17290 / CCUG 55495 / CIP 109462 / JCM 13490 / 255-15)).